The primary structure comprises 529 residues: Isoleucine--tRNA ligase (529 aa).

Glu482 lines the L-isoleucyl-5'-AMP pocket. The 'KMSKS' region signature appears at 523-527 (KMSKS). Residue Lys526 coordinates ATP.

It belongs to the class-I aminoacyl-tRNA synthetase family. IleS type 1 subfamily. In terms of assembly, monomer.

It localises to the cytoplasm. The catalysed reaction is tRNA(Ile) + L-isoleucine + ATP = L-isoleucyl-tRNA(Ile) + AMP + diphosphate. In terms of biological role, catalyzes the attachment of isoleucine to tRNA(Ile). As IleRS can inadvertently accommodate and process structurally similar amino acids such as valine, to avoid such errors it has two additional distinct tRNA(Ile)-dependent editing activities. One activity is designated as 'pretransfer' editing and involves the hydrolysis of activated Val-AMP. The other activity is designated 'posttransfer' editing and involves deacylation of mischarged Val-tRNA(Ile). This Aquifex pyrophilus protein is Isoleucine--tRNA ligase (ileS).